The primary structure comprises 317 residues: GTPase Era (317 aa).

The region spanning 23 to 190 (RSGFVALIGP…MDYLVETLPE (168 aa)) is the Era-type G domain. The G1 stretch occupies residues 31–38 (GPTNAGKS). 31-38 (GPTNAGKS) contributes to the GTP binding site. The G2 stretch occupies residues 57 to 61 (QTTRA). Positions 78 to 81 (DTPG) are G3. GTP-binding positions include 78–82 (DTPGI) and 140–143 (NKID). A G4 region spans residues 140–143 (NKID). The interval 169–171 (ISA) is G5. Positions 221-298 (LHQELPYASH…HLFLFVKVRE (78 aa)) constitute a KH type-2 domain.

It belongs to the TRAFAC class TrmE-Era-EngA-EngB-Septin-like GTPase superfamily. Era GTPase family. Monomer.

Its subcellular location is the cytoplasm. It is found in the cell inner membrane. In terms of biological role, an essential GTPase that binds both GDP and GTP, with rapid nucleotide exchange. Plays a role in 16S rRNA processing and 30S ribosomal subunit biogenesis and possibly also in cell cycle regulation and energy metabolism. This is GTPase Era from Agrobacterium fabrum (strain C58 / ATCC 33970) (Agrobacterium tumefaciens (strain C58)).